The sequence spans 124 residues: Large ribosomal subunit protein bL12 (124 aa).

The protein belongs to the bacterial ribosomal protein bL12 family. In terms of assembly, homodimer. Part of the ribosomal stalk of the 50S ribosomal subunit. Forms a multimeric L10(L12)X complex, where L10 forms an elongated spine to which 2 to 4 L12 dimers bind in a sequential fashion. Binds GTP-bound translation factors.

Its function is as follows. Forms part of the ribosomal stalk which helps the ribosome interact with GTP-bound translation factors. Is thus essential for accurate translation. The polypeptide is Large ribosomal subunit protein bL12 (Borreliella afzelii (strain PKo) (Borrelia afzelii)).